The primary structure comprises 357 residues: MSLTRLLIRDFRNIENADLALSPGFNFLVGANGSGKTSVLEAIYTLGHGRAFRSLQIGRVIRHEQESFVLHGRLQGEERETAIGLTKDKLGDSKVRIDGTDGHKVAELAHLMPMQLITPEGFTLLNGGPKYRRAFLDWGCFHNEVGFFTAWSNLKRLLKQRNAALRQVSRYEQLRPWDKELIPLAEQISTWRAEYSAGIAQDMADTCQQFLPEFSLTFSFQRGWEKETDYAEVLERSFERDRMLTYTAHGPHKADFRIRADGAPVEDTLSRGQLKLLMCALRLAQGEFLTRESGRRCLYLIDDFASELDDARRGLLASRLKATQSQVFVSAISAEHVLDMSDKNSKMFTVEKGKITD.

30-37 (GANGSGKT) lines the ATP pocket.

This sequence belongs to the RecF family.

Its subcellular location is the cytoplasm. Functionally, the RecF protein is involved in DNA metabolism; it is required for DNA replication and normal SOS inducibility. RecF binds preferentially to single-stranded, linear DNA. It also seems to bind ATP. The protein is DNA replication and repair protein RecF of Citrobacter koseri (strain ATCC BAA-895 / CDC 4225-83 / SGSC4696).